The chain runs to 107 residues: U1-lycotoxin-Ls1l (107 aa).

The first 20 residues, 1–20 (MMKVLVVVALLVTLISYSSS), serve as a signal peptide directing secretion. Positions 21–41 (EGIDDLEADELLSLMANEQTR) are excised as a propeptide. 4 disulfide bridges follow: C44–C59, C51–C68, C58–C86, and C70–C84.

It belongs to the neurotoxin 19 (CSTX) family. 04 (U1-Lctx) subfamily. Expressed by the venom gland.

Its subcellular location is the secreted. In Lycosa singoriensis (Wolf spider), this protein is U1-lycotoxin-Ls1l.